Reading from the N-terminus, the 123-residue chain is Small ribosomal subunit protein uS12 (123 aa).

The residue at position 89 (D89) is a 3-methylthioaspartic acid.

This sequence belongs to the universal ribosomal protein uS12 family. As to quaternary structure, part of the 30S ribosomal subunit. Contacts proteins S8 and S17. May interact with IF1 in the 30S initiation complex.

In terms of biological role, with S4 and S5 plays an important role in translational accuracy. Its function is as follows. Interacts with and stabilizes bases of the 16S rRNA that are involved in tRNA selection in the A site and with the mRNA backbone. Located at the interface of the 30S and 50S subunits, it traverses the body of the 30S subunit contacting proteins on the other side and probably holding the rRNA structure together. The combined cluster of proteins S8, S12 and S17 appears to hold together the shoulder and platform of the 30S subunit. The chain is Small ribosomal subunit protein uS12 from Rhodospirillum centenum (strain ATCC 51521 / SW).